Here is a 244-residue protein sequence, read N- to C-terminus: tRNA (guanine-N(7)-)-methyltransferase (244 aa).

The S-adenosyl-L-methionine site is built by glutamate 42, aspartate 67, aspartate 94, and aspartate 116. Aspartate 116 is a catalytic residue. Residues lysine 120, aspartate 150, and 191–194 (TYYE) contribute to the substrate site.

It belongs to the class I-like SAM-binding methyltransferase superfamily. TrmB family.

It catalyses the reaction guanosine(46) in tRNA + S-adenosyl-L-methionine = N(7)-methylguanosine(46) in tRNA + S-adenosyl-L-homocysteine. It functions in the pathway tRNA modification; N(7)-methylguanine-tRNA biosynthesis. Its function is as follows. Catalyzes the formation of N(7)-methylguanine at position 46 (m7G46) in tRNA. The sequence is that of tRNA (guanine-N(7)-)-methyltransferase from Porphyromonas gingivalis (strain ATCC BAA-308 / W83).